Consider the following 112-residue polypeptide: Large ribosomal subunit protein eL33w (112 aa).

Belongs to the eukaryotic ribosomal protein eL33 family.

This chain is Large ribosomal subunit protein eL33w (RPL35AA), found in Arabidopsis thaliana (Mouse-ear cress).